The primary structure comprises 719 residues: MAEITVTIDTDQQKQAISDSFAKLDPQYLVKNPVLFVVELGTIIGLVMTIAPGLFGATGSRVYYAVITVLLGFTVIFANYAEAYAELEGEAQADSLRALQTEAEGKLLQNDDVDIEDISEDDYEVVASTEIEQDAVVFVDEGDIIPRDGTVVEGSASVDESAITGESEPVIRQSGGDRTSVVGGTEVLSDRIKVEVTSEEGESFLDQMIGLVEDAQRQKTPNEIAMTILLSGLTLVFVVAVATMFFFGEYLASFVGGFAGLDVAELVALLVALMPTTIGALLAAIRVAGMTRVTRRNVIAKSGRAVEAAGDLDALILDKTGTITTGERVAQDFHPLGDADDADVVRASYQSSLYDETTEGRSIVKLAEKMNGKVQTDGGQSASEELDEPGDSVDAPRDVSVTLDAEGLSESNFVPFSAETRMSGIDLSDGTEIRKGAVDAVEEYATTVPGKLRQKSNAISESGGTPLAIAVDGQVVGIIELQDELKPGIADRIAEIQKMGVETIMATGDNQRTARWVADQVGIDEFHAEFDPEEKIELVEDIQDDGKLVGMTGDGTNDAPALAKADVGLAMNAGTNAAKEAGNMVDLDSNPSKIIEVVGIGKQLLMTRGSLTTFSVANDVAKYFVLLPAILAAAIPGLGAMDILNLSTPASAVTATLMYNAFIIPLLIPLALRGVDYKAQSGAQLLRKNLIVYGGGGLIAPFIFIKAIDMLFVALGVFQ.

Helical transmembrane passes span 35-55 (LFVV…PGLF), 62-82 (VYYA…NYAE), 228-248 (ILLS…FFFG), and 254-274 (FVGG…VALM). Catalysis depends on D318, which acts as the 4-aspartylphosphate intermediate. Positions 355 and 359 each coordinate ATP. Positions 372-396 (GKVQTDGGQSASEELDEPGDSVDAP) are disordered. A compositionally biased stretch (polar residues) spans 373-383 (KVQTDGGQSAS). ATP is bound by residues 416 to 423 (FSAETRMS) and K435. 2 residues coordinate Mg(2+): D554 and D558. The next 3 membrane-spanning stretches (helical) occupy residues 624 to 644 (FVLL…MDIL), 652 to 672 (AVTA…PLAL), and 698 to 718 (LIAP…LGVF).

This sequence belongs to the cation transport ATPase (P-type) (TC 3.A.3) family. Type IA subfamily. As to quaternary structure, the system is composed of three essential subunits: KdpA, KdpB and KdpC. The complex also contains KdpF, a small non-essential subunit.

The protein resides in the cell membrane. The catalysed reaction is K(+)(out) + ATP + H2O = K(+)(in) + ADP + phosphate + H(+). Part of the high-affinity ATP-driven potassium transport (or Kdp) system, which catalyzes the hydrolysis of ATP coupled with the electrogenic transport of potassium into the cytoplasm. This subunit is responsible for energy coupling to the transport system and for the release of the potassium ions to the cytoplasm. The Kdp system is essential for growth under K(+) limitation, and for survival under desiccation and salt crystal inclusion. The sequence is that of Potassium-transporting ATPase ATP-binding subunit from Halobacterium salinarum (strain ATCC 29341 / DSM 671 / R1).